The sequence spans 145 residues: Large ribosomal subunit protein uL15 (145 aa).

Basic residues predominate over residues 1–13 (MIRSKRKINKLRG). A disordered region spans residues 1-44 (MIRSKRKINKLRGSRSNGGGCTKKRRGAGNKGGRGNAGASKQHW).

Belongs to the universal ribosomal protein uL15 family. In terms of assembly, part of the 50S ribosomal subunit.

Functionally, binds to the 23S rRNA. This Methanobrevibacter smithii (strain ATCC 35061 / DSM 861 / OCM 144 / PS) protein is Large ribosomal subunit protein uL15.